A 387-amino-acid polypeptide reads, in one-letter code: Leucine aminopeptidase 1 (387 aa).

The signal sequence occupies residues 1 to 18 (MKFTNLSLLALSASLASA). The propeptide occupies 19–86 (RFVEQHETDQ…LGTLRTSSVK (68 aa)). A glycan (N-linked (GlcNAc...) asparagine) is linked at N179. Zn(2+)-binding residues include H187, D206, E245, and D272. An intrachain disulfide couples C321 to C325. H354 is a Zn(2+) binding site.

This sequence belongs to the peptidase M28 family. M28E subfamily. Monomer. Zn(2+) is required as a cofactor.

The protein localises to the secreted. Extracellular aminopeptidase that allows assimilation of proteinaceous substrates. This chain is Leucine aminopeptidase 1 (lap1), found in Sclerotinia sclerotiorum (strain ATCC 18683 / 1980 / Ss-1) (White mold).